Consider the following 532-residue polypeptide: 4-amino-L-phenylalanyl-[CmlP-peptidyl-carrier-protein] 3-hydroxylase (532 aa).

The Fe cation site is built by histidine 305, histidine 307, aspartate 309, histidine 310, glutamate 377, and aspartate 403.

The protein belongs to the metallo-beta-lactamase superfamily. Homodimer. Requires Fe(2+) as cofactor.

It carries out the reaction 4-amino-L-phenylalanyl-[peptidyl-carrier protein] + AH2 + O2 = (2R)-2-(4-aminophenyl)-L-seryl-[peptidyl-carrier protein] + A + H2O. Its pathway is antibiotic biosynthesis. In terms of biological role, involved in chloramphenicol biosynthesis. Catalyzes the beta-hydroxylation of 4-amino-L-phenylalanine (L-PAPA) covalently bound to CmlP to form L-p-aminophenylserine. This Streptomyces venezuelae (strain ATCC 10712 / CBS 650.69 / DSM 40230 / JCM 4526 / NBRC 13096 / PD 04745) protein is 4-amino-L-phenylalanyl-[CmlP-peptidyl-carrier-protein] 3-hydroxylase.